Here is a 123-residue protein sequence, read N- to C-terminus: Large ribosomal subunit protein bL12 (123 aa).

Belongs to the bacterial ribosomal protein bL12 family. In terms of assembly, homodimer. Part of the ribosomal stalk of the 50S ribosomal subunit. Forms a multimeric L10(L12)X complex, where L10 forms an elongated spine to which 2 to 4 L12 dimers bind in a sequential fashion. Binds GTP-bound translation factors.

In terms of biological role, forms part of the ribosomal stalk which helps the ribosome interact with GTP-bound translation factors. Is thus essential for accurate translation. In Parvibaculum lavamentivorans (strain DS-1 / DSM 13023 / NCIMB 13966), this protein is Large ribosomal subunit protein bL12.